A 355-amino-acid chain; its full sequence is Tryptophan--tRNA ligase (355 aa).

Residues 13 to 15 and 21 to 22 contribute to the ATP site; these read QPT and GN. A 'HIGH' region motif is present at residues 14–22; the sequence is PTGNLHLGN. Residue Asp137 coordinates L-tryptophan. Residues 149 to 151, Ile208, and 217 to 221 contribute to the ATP site; these read GED and KMSKS. A 'KMSKS' region motif is present at residues 217 to 221; sequence KMSKS.

The protein belongs to the class-I aminoacyl-tRNA synthetase family. In terms of assembly, homodimer.

It is found in the cytoplasm. It carries out the reaction tRNA(Trp) + L-tryptophan + ATP = L-tryptophyl-tRNA(Trp) + AMP + diphosphate + H(+). Its function is as follows. Catalyzes the attachment of tryptophan to tRNA(Trp). This chain is Tryptophan--tRNA ligase, found in Brucella melitensis biotype 1 (strain ATCC 23456 / CCUG 17765 / NCTC 10094 / 16M).